A 382-amino-acid chain; its full sequence is tRNA-specific 2-thiouridylase MnmA (382 aa).

ATP is bound by residues 18–25 (AMSGGVDS) and Leu-44. Cys-112 functions as the Nucleophile in the catalytic mechanism. Cys-112 and Cys-209 are oxidised to a cystine. Gly-136 contributes to the ATP binding site. The interaction with tRNA stretch occupies residues 159–161 (RDQ). The active-site Cysteine persulfide intermediate is Cys-209.

This sequence belongs to the MnmA/TRMU family.

It is found in the cytoplasm. The enzyme catalyses S-sulfanyl-L-cysteinyl-[protein] + uridine(34) in tRNA + AH2 + ATP = 2-thiouridine(34) in tRNA + L-cysteinyl-[protein] + A + AMP + diphosphate + H(+). In terms of biological role, catalyzes the 2-thiolation of uridine at the wobble position (U34) of tRNA, leading to the formation of s(2)U34. The polypeptide is tRNA-specific 2-thiouridylase MnmA (Methylobacterium sp. (strain 4-46)).